The chain runs to 338 residues: Fructose-1,6-bisphosphatase class 1 1 (338 aa).

Mg(2+) contacts are provided by Glu88, Asp107, Leu109, and Asp110. Substrate is bound by residues Asp110–Ser113 and Asn196. Glu268 serves as a coordination point for Mg(2+).

The protein belongs to the FBPase class 1 family. As to quaternary structure, homotetramer. Mg(2+) serves as cofactor.

The protein resides in the cytoplasm. The catalysed reaction is beta-D-fructose 1,6-bisphosphate + H2O = beta-D-fructose 6-phosphate + phosphate. The protein operates within carbohydrate biosynthesis; Calvin cycle. This Bradyrhizobium sp. (strain BTAi1 / ATCC BAA-1182) protein is Fructose-1,6-bisphosphatase class 1 1.